Consider the following 799-residue polypeptide: Disintegrin and metalloproteinase domain-containing protein B (799 aa).

A signal peptide spans 1 to 23 (MKAFSCLLSVIATAASLFQHVDA). Over 24–707 (RSHARDKLNN…VSDWVSRHKP (684 aa)) the chain is Extracellular. Residues Asn33, Asn227, Asn228, Asn314, and Asn408 are each glycosylated (N-linked (GlcNAc...) asparagine). The Peptidase M12B domain maps to 272-511 (KVALIGVVAD…RTILTSCLTT (240 aa)). 3 disulfides stabilise this stretch: Cys396/Cys496, Cys449/Cys460, and Cys581/Cys601. His432 is a Zn(2+) binding site. Glu433 is an active-site residue. The Zn(2+) site is built by His436 and His442. A Disintegrin domain is found at 520–609 (GQQCGNGIVE…DCPHDIHSKD (90 aa)). The chain crosses the membrane as a helical span at residues 708–728 (IVIGVAVGAGCLLLLAIASCI). The Cytoplasmic portion of the chain corresponds to 729–799 (CGRSRRQRPR…PGHLPSTRYA (71 aa)). Positions 753–799 (VYNGWNGAPPNAQQSSPGGHPPYNNIPPPINAPPPAYPGHLPSTRYA) are disordered. The span at 776-789 (NNIPPPINAPPPAY) shows a compositional bias: pro residues.

The cofactor is Zn(2+).

The protein resides in the membrane. In terms of biological role, probable zinc protease. The chain is Disintegrin and metalloproteinase domain-containing protein B (ADM-B) from Arthroderma benhamiae (strain ATCC MYA-4681 / CBS 112371) (Trichophyton mentagrophytes).